The chain runs to 992 residues: Disks large-associated protein 1 (992 aa).

Disordered regions lie at residues 150–209 (TKSH…SWWS) and 355–376 (KAMGDEDSGDSDTSPKPSPKVA). Phosphoserine is present on serine 169. Residues 194–209 (RSNASNASPTSPSWWS) are compositionally biased toward low complexity. 13 positions are modified to phosphoserine: serine 362, serine 365, serine 368, serine 372, serine 389, serine 418, serine 421, serine 425, serine 428, serine 437, serine 509, serine 516, and serine 578. Threonine 579 is subject to Phosphothreonine. Residues serine 581 and serine 605 each carry the phosphoserine modification. A Phosphothreonine modification is found at threonine 606. Phosphoserine is present on residues serine 608 and serine 611. Interaction with DYL2 stretches follow at residues 665-676 (LSIGIQVDDAEE) and 687-698 (NKFQSVGVQVEE). The segment at 914–980 (WKQMDPLDKK…QNSATESAES (67 aa)) is disordered. 2 stretches are compositionally biased toward basic and acidic residues: residues 918–927 (DPLDKKERRA) and 943–958 (IRERSLESSQRQEARK). A Phosphoserine modification is found at serine 947. Polar residues predominate over residues 969–978 (VRQNSATESA). Positions 990 to 992 (TRL) match the PDZ-binding motif.

This sequence belongs to the SAPAP family. As to quaternary structure, interacts with the guanylate kinase-like domain of DLG1, DLG2, DLG3, DLG4 and AIP1. Interacts with the PDZ domain of SHANK1, SHANK2 and SHANK3. Found in a complex with DLG4 and SHANK1, SHANK2 or SHANK3. Found in a complex with DLG4 and BEGAIN. Interacts with DYL2 and LRFN1. Interacts with MPP2 (via the SH3-Guanylate kinase-like sub-module). In terms of processing, ubiquitinated by TRIM3; leading to proteasomal degradation. Highest levels in the neocortex, part of the hippocampus, the granule cell layer of the cerebellum, the glomerular layer of the olfactory bulb, the inner plexiform layer of the retina, the ventral and dorsal horn of the spinal cord, the neuromuscular junction and the submandibular ganglion.

It localises to the cell membrane. It is found in the postsynaptic density. The protein localises to the synapse. In terms of biological role, part of the postsynaptic scaffold in neuronal cells. This Mus musculus (Mouse) protein is Disks large-associated protein 1 (Dlgap1).